Here is a 173-residue protein sequence, read N- to C-terminus: NADH-ubiquinone oxidoreductase chain 6 (173 aa).

Transmembrane regions (helical) follow at residues Met1–Ser21, Tyr27–Gly47, Val48–Val68, Val87–Phe107, and Cys139–Leu159.

This sequence belongs to the complex I subunit 6 family.

The protein localises to the mitochondrion membrane. The enzyme catalyses a ubiquinone + NADH + 5 H(+)(in) = a ubiquinol + NAD(+) + 4 H(+)(out). In terms of biological role, core subunit of the mitochondrial membrane respiratory chain NADH dehydrogenase (Complex I) that is believed to belong to the minimal assembly required for catalysis. Complex I functions in the transfer of electrons from NADH to the respiratory chain. The immediate electron acceptor for the enzyme is believed to be ubiquinone. The protein is NADH-ubiquinone oxidoreductase chain 6 (MT-ND6) of Aethia pusilla (Least auklet).